The primary structure comprises 294 residues: MNTAYIGRFAPTPSGYLHFGSLVAALASYLDARAVGGRWLLRMEDLDPPREIPGAQDAILRTLETYGFEWDGELVRQSERHAEYAAVIARLLSQGLAYACTCSRKQLEGYAGIYPGFCRNACHPDHDAAIRLRVPELDYHFIDRVQGEFRQHLGREVGDFVIRRRDGLFAYQLAVVLDDAWQGVTDVVRGADLLDSTPRQLYLQELLGLPQPRYLHVPLIIQPDGHKLGKSYRSPPLPADQAGPLLLRALRALGQQPPTELQGAAPAELLSWGRANWDAMRIPRSRTLAEAQLR.

Residues 8-12 and Glu-44 contribute to the L-glutamate site; that span reads RFAPT. A 'HIGH' region motif is present at residues 11–21; that stretch reads PTPSGYLHFGS. Zn(2+) contacts are provided by Cys-100, Cys-102, Tyr-114, and Cys-118. L-glutamate contacts are provided by Tyr-171 and Arg-189. Positions 227 to 231 match the 'KMSKS' region motif; that stretch reads KLGKS. Lys-230 provides a ligand contact to ATP.

The protein belongs to the class-I aminoacyl-tRNA synthetase family. GluQ subfamily. Zn(2+) serves as cofactor.

Its function is as follows. Catalyzes the tRNA-independent activation of glutamate in presence of ATP and the subsequent transfer of glutamate onto a tRNA(Asp). Glutamate is transferred on the 2-amino-5-(4,5-dihydroxy-2-cyclopenten-1-yl) moiety of the queuosine in the wobble position of the QUC anticodon. The chain is Glutamyl-Q tRNA(Asp) synthetase from Ectopseudomonas mendocina (strain ymp) (Pseudomonas mendocina).